The primary structure comprises 908 residues: Magnesium-transporting ATPase, P-type 1 (908 aa).

Basic and acidic residues predominate over residues 1-20 (MTDMNIENRKLNRPASENDK). The segment at 1–21 (MTDMNIENRKLNRPASENDKQ) is disordered. Topologically, residues 1–80 (MTDMNIENRK…QVPPALIQLL (80 aa)) are cytoplasmic. Residues 81-101 (QAFNNPFIYVLMALAGVSFIT) form a helical membrane-spanning segment. The Extracellular segment spans residues 102–113 (DYWLPLRRGEET). Residues 114–134 (DLTGVLIILTMVSLSGLLRFW) traverse the membrane as a helical segment. Topologically, residues 135–293 (QEFRTNRAAQ…QTAFDRGVNS (159 aa)) are cytoplasmic. The helical transmembrane segment at 294 to 314 (VSWLLIRFMLIMVPVVLLING) threads the bilayer. Residues 315–323 (FSKGDWVEA) are Extracellular-facing. Residues 324-341 (SLFALAVAVGLTPEMLPM) form a helical membrane-spanning segment. E337 contributes to the Mg(2+) binding site. Residues 342–704 (IVSSNLAKGA…IKGRETFGNI (363 aa)) lie on the Cytoplasmic side of the membrane. D379 functions as the 4-aspartylphosphate intermediate in the catalytic mechanism. Mg(2+) is bound by residues D650, D654, and N718. A helical transmembrane segment spans residues 705-724 (IKYLNMTASSNFGNVFSVLV). Residues 725-733 (ASAFIPFLP) lie on the Extracellular side of the membrane. A helical membrane pass occupies residues 734 to 753 (MLAIHLLIQNLMYDISQLSL). Mg(2+) contacts are provided by N743 and D747. The Cytoplasmic segment spans residues 754 to 775 (PWDKMDKEFLRKPRKWDAKNIG). A helical membrane pass occupies residues 776 to 799 (RFMLWIGPTSSIFDITTFALMWYV). Residues 800–808 (FAANNVEAQ) are Extracellular-facing. A helical transmembrane segment spans residues 809–827 (ALFQSGWFIEGLLSQTLVV). At 828-840 (HMLRTQKIPFIQS) the chain is on the cytoplasmic side. The chain crosses the membrane as a helical span at residues 841–860 (RATLPVLLTTGLIMAIGIYI). The Extracellular segment spans residues 861 to 875 (PFSPLGAMVGLEPLP). The chain crosses the membrane as a helical span at residues 876-895 (LSYFPWLVATLLSYCLVAQG). At 896–908 (MKRFYIKRFGQWF) the chain is on the cytoplasmic side.

This sequence belongs to the cation transport ATPase (P-type) (TC 3.A.3) family. Type IIIB subfamily.

The protein resides in the cell inner membrane. It carries out the reaction Mg(2+)(out) + ATP + H2O = Mg(2+)(in) + ADP + phosphate + H(+). In terms of biological role, mediates magnesium influx to the cytosol. This is Magnesium-transporting ATPase, P-type 1 (mgtB) from Salmonella typhimurium (strain LT2 / SGSC1412 / ATCC 700720).